Consider the following 955-residue polypeptide: UPF0182 protein PMT_0755 (955 aa).

Helical transmembrane passes span 25 to 45 (LLLS…WLWF), 58 to 78 (WLWQ…CQLW), 107 to 127 (LLGC…LAWL), 146 to 166 (IWAL…MLGN), 178 to 198 (CFCF…ALAI), 214 to 234 (FGLG…AQLI), 264 to 284 (CNFL…LLWL), 313 to 333 (SLAS…TWIQ), and 340 to 360 (LIAS…APFV).

It belongs to the UPF0182 family.

The protein localises to the cell membrane. The chain is UPF0182 protein PMT_0755 from Prochlorococcus marinus (strain MIT 9313).